The primary structure comprises 176 residues: Large ribosomal subunit protein uL10 (176 aa).

Belongs to the universal ribosomal protein uL10 family. In terms of assembly, part of the ribosomal stalk of the 50S ribosomal subunit. The N-terminus interacts with L11 and the large rRNA to form the base of the stalk. The C-terminus forms an elongated spine to which L12 dimers bind in a sequential fashion forming a multimeric L10(L12)X complex.

Forms part of the ribosomal stalk, playing a central role in the interaction of the ribosome with GTP-bound translation factors. The chain is Large ribosomal subunit protein uL10 from Sorangium cellulosum (strain So ce56) (Polyangium cellulosum (strain So ce56)).